We begin with the raw amino-acid sequence, 288 residues long: Diaminopimelate epimerase (288 aa).

Residues asparagine 13, glutamine 46, and asparagine 66 each contribute to the substrate site. The active-site Proton donor is cysteine 75. Residues glycine 76–asparagine 77, asparagine 166, asparagine 199, and glutamate 217–arginine 218 contribute to the substrate site. Catalysis depends on cysteine 226, which acts as the Proton acceptor. Glycine 227–threonine 228 contacts substrate.

The protein belongs to the diaminopimelate epimerase family. As to quaternary structure, homodimer.

Its subcellular location is the cytoplasm. It carries out the reaction (2S,6S)-2,6-diaminopimelate = meso-2,6-diaminopimelate. The protein operates within amino-acid biosynthesis; L-lysine biosynthesis via DAP pathway; DL-2,6-diaminopimelate from LL-2,6-diaminopimelate: step 1/1. Catalyzes the stereoinversion of LL-2,6-diaminopimelate (L,L-DAP) to meso-diaminopimelate (meso-DAP), a precursor of L-lysine and an essential component of the bacterial peptidoglycan. The protein is Diaminopimelate epimerase of Cupriavidus taiwanensis (strain DSM 17343 / BCRC 17206 / CCUG 44338 / CIP 107171 / LMG 19424 / R1) (Ralstonia taiwanensis (strain LMG 19424)).